We begin with the raw amino-acid sequence, 357 residues long: Glutamine synthetase (357 aa).

One can recognise a GS beta-grasp domain in the interval 25–104; sequence VMAEYIWIDA…VLCETWDSDG (80 aa). Residues 111 to 357 form the GS catalytic domain; that stretch reads YRHDCARLME…IIAETLCGGL (247 aa).

The protein belongs to the glutamine synthetase family. As to quaternary structure, homooctamer.

Its subcellular location is the cytoplasm. It carries out the reaction L-glutamate + NH4(+) + ATP = L-glutamine + ADP + phosphate + H(+). The sequence is that of Glutamine synthetase (glnA) from Emericella nidulans (strain FGSC A4 / ATCC 38163 / CBS 112.46 / NRRL 194 / M139) (Aspergillus nidulans).